The following is a 505-amino-acid chain: RNA-splicing ligase RtcB homolog (505 aa).

Asp119, Cys122, His227, and His259 together coordinate Mn(2+). Position 226–230 (Asn226–Glu230) interacts with GMP. Position 300 is a phosphoserine (Ser300). His353 serves as a coordination point for Mn(2+). Residues His353–Asn354, Gly402–Met405, Ser409, and His428–Gly431 contribute to the GMP site. His428 acts as the GMP-histidine intermediate in catalysis. Residue Lys496 forms a Glycyl lysine isopeptide (Lys-Gly) (interchain with G-Cter in SUMO2) linkage. Lys504 contributes to the GMP binding site.

The protein belongs to the RtcB family. As to quaternary structure, catalytic component of the tRNA-splicing ligase complex. Mn(2+) serves as cofactor.

The protein localises to the nucleus. Its subcellular location is the cytoplasm. The enzyme catalyses a 3'-end 3'-phospho-ribonucleotide-RNA + a 5'-end dephospho-ribonucleoside-RNA + GTP = a ribonucleotidyl-ribonucleotide-RNA + GMP + diphosphate. The catalysed reaction is a 3'-end 2',3'-cyclophospho-ribonucleotide-RNA + a 5'-end dephospho-ribonucleoside-RNA + GTP + H2O = a ribonucleotidyl-ribonucleotide-RNA + GMP + diphosphate + H(+). In terms of biological role, catalytic subunit of the tRNA-splicing ligase complex that acts by directly joining spliced tRNA halves to mature-sized tRNAs by incorporating the precursor-derived splice junction phosphate into the mature tRNA as a canonical 3',5'-phosphodiester. May act as an RNA ligase with broad substrate specificity, and may function toward other RNAs. The sequence is that of RNA-splicing ligase RtcB homolog from Rattus norvegicus (Rat).